The sequence spans 1178 residues: Ubiquitin carboxyl-terminal hydrolase cyk-3 (1178 aa).

EF-hand domains lie at 28–60, 175–210, and 211–246; these read EEYRRIRQAFQRFKNGCINYDEFCYHVLGGAQI, FPDSYAERLFAVFDENRDGQIDFRELVCTLSALCRG, and PLPGRISQLARIWDVDCDKLLSDEELSNMYKDLNVP. Residues Asp-188, Asn-190, Asp-192, Gln-194, Glu-199, Asp-224, Asp-226, Asp-228, and Glu-235 each coordinate Ca(2+). In terms of domain architecture, DUSP spans 296 to 410; that stretch reads ESRKMELQIV…VDSQFTRKYL (115 aa). One can recognise a USP domain in the interval 570–1175; sequence VGLVNYGNFC…GAYLLFYERK (606 aa). Cys-579 acts as the Nucleophile in catalysis. The segment at 681–725 is disordered; it reads SNKSLHPSPEESEGTDSNKLSDSSKKKEADKEEADEEKAERSWTE. The active-site Proton acceptor is His-1134.

Belongs to the peptidase C19 family. In terms of tissue distribution, expressed in excretory cells, coelomocytes, head neurons, hypodermal cells, germ cells, oocytes, sperm and pharynx (at protein level).

It localises to the nucleus. Its subcellular location is the cytoplasm. It is found in the cytoskeleton. The protein localises to the microtubule organizing center. The enzyme catalyses Thiol-dependent hydrolysis of ester, thioester, amide, peptide and isopeptide bonds formed by the C-terminal Gly of ubiquitin (a 76-residue protein attached to proteins as an intracellular targeting signal).. Ubiquitin-protein hydrolase which cleaves ubiquitin from ubiquitinated proteins. Plays a role in embryo osmoregulation. Probably by regulating osmosis, controls actin redistribution in the 1-cell embryos and thus actin-dependent processes such as cytokinesis and P-granules segregation. During the first embryonic mitotic division, involved in the formation of a functional microtubule organizing center provided by the male pronucleus. Acts as a positive regulator of the mTORC1 signaling. This Caenorhabditis elegans protein is Ubiquitin carboxyl-terminal hydrolase cyk-3.